We begin with the raw amino-acid sequence, 551 residues long: L-lactate permease (551 aa).

Transmembrane regions (helical) follow at residues 13–33 (NIWL…FALI), 37–57 (LKGY…ALLF), 69–89 (VVYG…AAVF), 131–151 (GAAG…GLGF), 159–179 (LCLI…PILV), 194–214 (MVGR…MAIM), 244–264 (FIGP…CLTL), 306–326 (FLFL…ALFA), 366–386 (FDWF…SIVW), 405–425 (LALP…SNYS), 438–458 (TGSA…FLTG), and 530–550 (IFTC…TWMI).

The protein belongs to the lactate permease family.

It localises to the cell inner membrane. The enzyme catalyses (S)-lactate(in) + H(+)(in) = (S)-lactate(out) + H(+)(out). It catalyses the reaction (R)-lactate(in) + H(+)(in) = (R)-lactate(out) + H(+)(out). The catalysed reaction is glycolate(in) + H(+)(in) = glycolate(out) + H(+)(out). Its function is as follows. Uptake of L-lactate across the membrane. Can also transport D-lactate and glycolate. Seems to be driven by a proton motive force. This Salmonella typhimurium (strain LT2 / SGSC1412 / ATCC 700720) protein is L-lactate permease (lldP).